We begin with the raw amino-acid sequence, 241 residues long: MTIKDSIYASEQQVKDFSFDQNVVEVFPDMIQRSVPGYATIVSTMGKLAGEYAQSNSNLYDLGCSLGAVTLSMRRNIRTDNCHIIAVDNSQAMVERCKVHLQGFKSEVPVTVTLGDINELEIQNASVVAMNFTLQFIPHAQRQAVLEKIYANLKPGGVLLLSEKIKAENELCDNLLIDLHHDFKRHNGYSELEISQKRTAIENVMRPDTLSTHFTRLKDIGFSQTQAWYQCFNFCSMIAIK.

S-adenosyl-L-methionine contacts are provided by residues Tyr38, 63-65 (GCS), 88-89 (DN), 116-117 (DI), Asn131, and Arg198.

The protein belongs to the class I-like SAM-binding methyltransferase superfamily. Cx-SAM synthase family. As to quaternary structure, homodimer.

It carries out the reaction prephenate + S-adenosyl-L-methionine = carboxy-S-adenosyl-L-methionine + 3-phenylpyruvate + H2O. In terms of biological role, catalyzes the conversion of S-adenosyl-L-methionine (SAM) to carboxy-S-adenosyl-L-methionine (Cx-SAM). In Pseudoalteromonas translucida (strain TAC 125), this protein is Carboxy-S-adenosyl-L-methionine synthase.